The chain runs to 277 residues: MAIISMKQLLEAGVHFGHQTNKWNPKMKPYIFGARNNIYIIDLQQTVGLFQNAYNFVIDTVSEGGEIMFIGTKKQSQDSIHDEATRCGMPYVNQRWLGGMLTNFVTIKKRIDRLNYLDQIFEDDSVRAFPKKEIMGLQKEREKLVKVLGGIQKMKSLPAALFIVDPKRETIAVNEAKKLRIPIIAIVDTNCDPENIDYIIPGNDDAIRAIKLFSSKFADAVTEGKRRYEERLQAETDKDAESSTVQQEENPEADIPESIETKESVSAAADSDLDENE.

Positions 228–241 (YEERLQAETDKDAE) are enriched in basic and acidic residues. Positions 228–277 (YEERLQAETDKDAESSTVQQEENPEADIPESIETKESVSAAADSDLDENE) are disordered.

The protein belongs to the universal ribosomal protein uS2 family.

This is Small ribosomal subunit protein uS2 from Syntrophus aciditrophicus (strain SB).